The sequence spans 213 residues: Putative protein Brevis radix-like 3 (213 aa).

Residues 7 to 27 (CSSKEGGEDGSRGAATPHGRD) form a disordered region. Residues 158–213 (REWTAQVEPGVQITFVTLPGGGNDLKRIRFSRERFGEDRAKVWWEHNRDRIQAQYL) form the BRX domain.

It belongs to the BRX family.

Its subcellular location is the nucleus. The chain is Putative protein Brevis radix-like 3 (BRXL3) from Oryza sativa subsp. japonica (Rice).